The sequence spans 2262 residues: Klarsicht protein (2262 aa).

Disordered stretches follow at residues 1–140 (MEMQ…VGND), 345–410 (QQQQ…GEGN), 442–475 (AANG…LNEV), 514–561 (QSQS…PDIG), 800–832 (ATSS…DKEN), 859–898 (SNYD…QLQM), 1000–1031 (HLPP…VSPV), 1115–1157 (PSCK…SEGF), 1246–1316 (SGLA…ELGG), and 1533–1670 (VRRK…QQSR). Residues 1–1774 (MEMQQENETG…KPTPELLDTE (1774 aa)) form a required for apical microtubules localization region. Residues 1 to 2215 (MEMQQENETG…KRGWAWRIAR (2215 aa)) are Cytoplasmic-facing. Residues 58-67 (KIEHTTKPLK) are compositionally biased toward basic and acidic residues. The span at 131 to 140 (NYGTNSVGND) shows a compositional bias: polar residues. Residues 345–402 (QQQQLSSQQPASLTSNCSSESTSESATKSSSLSSGFASDPVTTPIGTAAAAPPSSSTH) are compositionally biased toward low complexity. Residues 446-475 (LDDDEDEEEDTEDDSFGYEGEATEDDLNEV) are compositionally biased toward acidic residues. Positions 514–525 (QSQSRSQQVPSQ) are enriched in low complexity. A compositionally biased stretch (acidic residues) spans 546–560 (EADEELEEEDEDPDI). Low complexity-rich tracts occupy residues 809-818 (STAVSSTTAT) and 859-881 (SNYD…SNSN). A compositionally biased stretch (polar residues) spans 882–894 (GRLTETSATSRVT). A compositionally biased stretch (low complexity) spans 1006 to 1018 (PAKSAKSTKSQAS). The segment covering 1019 to 1028 (NATVSGSTLV) has biased composition (polar residues). The span at 1246-1259 (SGLASHSISESALD) shows a compositional bias: polar residues. Residues 1267 to 1280 (PRAASSSGTGSNAA) show a composition bias toward low complexity. Basic residues predominate over residues 1288–1299 (SLRRRKARKKRI). The segment covering 1550-1559 (QSDQQQQQLQ) has biased composition (low complexity). Positions 1560-1583 (VTPSLSASATALMTTPKNQSTSHQ) are enriched in polar residues. 2 stretches are compositionally biased toward basic and acidic residues: residues 1586–1596 (HRAESVGRKLD) and 1610–1640 (RTSE…EKCI). Residues 1809-1842 (LTKQERRLQSALEEQEQQQESEQLKQQKLVEEEK) adopt a coiled-coil conformation. The segment at 2092–2205 (HQQKQQIQQN…GEGADPAQTS (114 aa)) is disordered. Positions 2093–2105 (QQKQQIQQNQTQQ) are enriched in low complexity. Positions 2130 to 2142 (RRGKGARKARQAK) are enriched in basic residues. The KASH domain maps to 2207–2262 (RGWAWRIARAAVPMQVALFTIFCAACLMQPNCCDNLNNLSMSFTPQLRYIRGPPPI). Residues 2216–2236 (AAVPMQVALFTIFCAACLMQP) traverse the membrane as a helical; Anchor for type IV membrane protein segment. At 2237-2262 (NCCDNLNNLSMSFTPQLRYIRGPPPI) the chain is on the perinuclear space side.

It belongs to the nesprin family. In terms of assembly, core component of LINC complexes which are composed of inner nuclear membrane SUN domain-containing proteins coupled to outer nuclear membrane KASH domain-containing nesprins. Interacts with kud. Interacts with Msp300; this interaction allows the anchoring of Msp300 nuclear ring structure to the nuclear envelope. In terms of tissue distribution, expressed ubiquitously in the eye disk, but at much higher levels posterior to the morphogenetic furrow. Expressed in R-cells and also in non-neural cone cells.

It is found in the cytoplasm. The protein localises to the cytoskeleton. The protein resides in the microtubule organizing center. Its subcellular location is the perinuclear region. It localises to the nucleus membrane. It is found in the nucleus envelope. In terms of biological role, component of the LINC (LInker of Nucleoskeleton and Cytoskeleton) complex involved in the connection between the nuclear lamina and the cytoskeleton. Plays a role in the nuclear positioning and links the nucleus to the microtubule organizing center (MTOC). Collaborates with Klar to promote even spacing of the myonuclei at the periphery of striated muscle fibers by mediating a tight association between a nuclear ring structure of Msp300 and the plus ends of a unique astral microtubule (MT) network. The sequence is that of Klarsicht protein from Drosophila melanogaster (Fruit fly).